A 262-amino-acid polypeptide reads, in one-letter code: Small ribosomal subunit protein eS1y (262 aa).

The span at 1–18 (MAVGKNKRISKGRKGGKK) shows a compositional bias: basic residues. The disordered stretch occupies residues 1–21 (MAVGKNKRISKGRKGGKKKAV).

It belongs to the eukaryotic ribosomal protein eS1 family. In terms of assembly, component of the small ribosomal subunit. Mature ribosomes consist of a small (40S) and a large (60S) subunit. The 40S subunit contains about 33 different proteins and 1 molecule of RNA (18S). The 60S subunit contains about 49 different proteins and 3 molecules of RNA (25S, 5.8S and 5S).

It localises to the cytoplasm. In Arabidopsis thaliana (Mouse-ear cress), this protein is Small ribosomal subunit protein eS1y.